The primary structure comprises 551 residues: NAD(P)H-quinone oxidoreductase chain 4 (551 aa).

Transmembrane regions (helical) follow at residues 25 to 45 (FPWL…VPFI), 56 to 76 (WFAL…YLNG), 111 to 131 (LILL…PVTF), 133 to 153 (PKLF…VFAV), 157 to 177 (LLFF…LAIW), 189 to 209 (FILY…AMGF), 233 to 253 (LLCY…VPLH), 264 to 284 (TAPV…YALM), 298 to 318 (FAPL…LTSF), 335 to 355 (MGFV…GAML), 356 to 376 (QMIS…ATYD), 397 to 417 (FALW…SGFV), 438 to 458 (IVID…LLSM), and 485 to 505 (VYII…PRLM).

The protein belongs to the complex I subunit 4 family.

It localises to the cellular thylakoid membrane. It catalyses the reaction a plastoquinone + NADH + (n+1) H(+)(in) = a plastoquinol + NAD(+) + n H(+)(out). The enzyme catalyses a plastoquinone + NADPH + (n+1) H(+)(in) = a plastoquinol + NADP(+) + n H(+)(out). Functionally, NDH-1 shuttles electrons from NAD(P)H, via FMN and iron-sulfur (Fe-S) centers, to quinones in the respiratory chain. The immediate electron acceptor for the enzyme in this species is believed to be plastoquinone. Couples the redox reaction to proton translocation (for every two electrons transferred, four hydrogen ions are translocated across the cytoplasmic membrane), and thus conserves the redox energy in a proton gradient. This Synechococcus sp. (strain WH7803) protein is NAD(P)H-quinone oxidoreductase chain 4.